We begin with the raw amino-acid sequence, 128 residues long: Gastrotropin (128 aa).

Ala2 is subject to N-acetylalanine.

It belongs to the calycin superfamily. Fatty-acid binding protein (FABP) family. In terms of tissue distribution, expressed in ileum.

The protein localises to the cytoplasm. The protein resides in the membrane. In terms of biological role, binds to bile acids and is involved in enterohepatic bile acid metabolism. Required for efficient apical to basolateral transport of conjugated bile acids in ileal enterocytes. Stimulates gastric acid and pepsinogen secretion. This chain is Gastrotropin (FABP6), found in Oryctolagus cuniculus (Rabbit).